Reading from the N-terminus, the 145-residue chain is Large-conductance mechanosensitive channel (145 aa).

The next 2 membrane-spanning stretches (helical) occupy residues V30–M50 and G74–I94.

It belongs to the MscL family. As to quaternary structure, homopentamer.

Its subcellular location is the cell inner membrane. Channel that opens in response to stretch forces in the membrane lipid bilayer. May participate in the regulation of osmotic pressure changes within the cell. This Synechocystis sp. (strain ATCC 27184 / PCC 6803 / Kazusa) protein is Large-conductance mechanosensitive channel.